The sequence spans 120 residues: uncharacterized protein (120 aa).

The chain crosses the membrane as a helical span at residues 40 to 62; sequence SFLTDALLNLIYILFFSSSVFNW.

It localises to the membrane. This is an uncharacterized protein from Saccharomyces cerevisiae (strain ATCC 204508 / S288c) (Baker's yeast).